The chain runs to 260 residues: Indole-3-glycerol phosphate synthase (260 aa).

This sequence belongs to the TrpC family.

The catalysed reaction is 1-(2-carboxyphenylamino)-1-deoxy-D-ribulose 5-phosphate + H(+) = (1S,2R)-1-C-(indol-3-yl)glycerol 3-phosphate + CO2 + H2O. It participates in amino-acid biosynthesis; L-tryptophan biosynthesis; L-tryptophan from chorismate: step 4/5. The protein is Indole-3-glycerol phosphate synthase of Neisseria meningitidis serogroup B (strain ATCC BAA-335 / MC58).